The following is a 1241-amino-acid chain: ATP-dependent helicase/nuclease subunit A (1241 aa).

Positions Ser12 to Arg485 constitute a UvrD-like helicase ATP-binding domain. Ala33 to Thr40 serves as a coordination point for ATP. A UvrD-like helicase C-terminal domain is found at Gly505–Gly805.

Belongs to the helicase family. AddA subfamily. In terms of assembly, heterodimer of AddA and AddB/RexB. The cofactor is Mg(2+).

The catalysed reaction is Couples ATP hydrolysis with the unwinding of duplex DNA by translocating in the 3'-5' direction.. The enzyme catalyses ATP + H2O = ADP + phosphate + H(+). Functionally, the heterodimer acts as both an ATP-dependent DNA helicase and an ATP-dependent, dual-direction single-stranded exonuclease. Recognizes the chi site generating a DNA molecule suitable for the initiation of homologous recombination. The AddA nuclease domain is required for chi fragment generation; this subunit has the helicase and 3' -&gt; 5' nuclease activities. This chain is ATP-dependent helicase/nuclease subunit A, found in Bacillus mycoides (strain KBAB4) (Bacillus weihenstephanensis).